Reading from the N-terminus, the 275-residue chain is 3-deoxy-manno-octulosonate cytidylyltransferase (275 aa).

This sequence belongs to the KdsB family.

Its subcellular location is the cytoplasm. It carries out the reaction 3-deoxy-alpha-D-manno-oct-2-ulosonate + CTP = CMP-3-deoxy-beta-D-manno-octulosonate + diphosphate. It participates in nucleotide-sugar biosynthesis; CMP-3-deoxy-D-manno-octulosonate biosynthesis; CMP-3-deoxy-D-manno-octulosonate from 3-deoxy-D-manno-octulosonate and CTP: step 1/1. The protein operates within bacterial outer membrane biogenesis; lipopolysaccharide biosynthesis. Functionally, activates KDO (a required 8-carbon sugar) for incorporation into bacterial lipopolysaccharide in Gram-negative bacteria. In Psychrobacter sp. (strain PRwf-1), this protein is 3-deoxy-manno-octulosonate cytidylyltransferase.